A 179-amino-acid polypeptide reads, in one-letter code: Large ribosomal subunit protein uL6 (179 aa).

This sequence belongs to the universal ribosomal protein uL6 family. Part of the 50S ribosomal subunit.

Functionally, this protein binds to the 23S rRNA, and is important in its secondary structure. It is located near the subunit interface in the base of the L7/L12 stalk, and near the tRNA binding site of the peptidyltransferase center. The sequence is that of Large ribosomal subunit protein uL6 from Spiroplasma citri.